Reading from the N-terminus, the 289-residue chain is Energy-coupling factor transporter ATP-binding protein EcfA2 (289 aa).

Residues 3 to 246 form the ABC transporter domain; it reads IQAKKLNYTY…PEWLKNHHLN (244 aa). Position 40–47 (40–47) interacts with ATP; it reads GHTGSGKS.

It belongs to the ABC transporter superfamily. Energy-coupling factor EcfA family. In terms of assembly, forms a stable energy-coupling factor (ECF) transporter complex composed of 2 membrane-embedded substrate-binding proteins (S component), 2 ATP-binding proteins (A component) and 2 transmembrane proteins (T component).

It is found in the cell membrane. ATP-binding (A) component of a common energy-coupling factor (ECF) ABC-transporter complex. Unlike classic ABC transporters this ECF transporter provides the energy necessary to transport a number of different substrates. This is Energy-coupling factor transporter ATP-binding protein EcfA2 from Ligilactobacillus salivarius (strain UCC118) (Lactobacillus salivarius).